The following is a 444-amino-acid chain: Methylenetetrahydrofolate--tRNA-(uracil-5-)-methyltransferase TrmFO (444 aa).

10-15 (GAGLAG) lines the FAD pocket.

Belongs to the MnmG family. TrmFO subfamily. FAD serves as cofactor.

It localises to the cytoplasm. It catalyses the reaction uridine(54) in tRNA + (6R)-5,10-methylene-5,6,7,8-tetrahydrofolate + NADH + H(+) = 5-methyluridine(54) in tRNA + (6S)-5,6,7,8-tetrahydrofolate + NAD(+). The catalysed reaction is uridine(54) in tRNA + (6R)-5,10-methylene-5,6,7,8-tetrahydrofolate + NADPH + H(+) = 5-methyluridine(54) in tRNA + (6S)-5,6,7,8-tetrahydrofolate + NADP(+). Functionally, catalyzes the folate-dependent formation of 5-methyl-uridine at position 54 (M-5-U54) in all tRNAs. This Streptococcus equi subsp. zooepidemicus (strain H70) protein is Methylenetetrahydrofolate--tRNA-(uracil-5-)-methyltransferase TrmFO.